Consider the following 493-residue polypeptide: Cytochrome c-552 (493 aa).

Positions 1-25 (MEKKLKSWQGWLLFCGAMAVVFVLG) are cleaved as a signal peptide. His116 contributes to the heme c binding site. Cys144, Cys147, and Lys148 together coordinate heme. Residues Cys182, Cys185, His186, Cys224, Cys227, and His228 each coordinate heme c. Ca(2+) is bound by residues Glu230, Tyr231, Lys276, and Gln278. Residue Tyr231 coordinates substrate. His279 lines the substrate pocket. Heme c contacts are provided by His290, Cys297, Cys300, His301, His315, Cys328, Cys331, His332, and His407.

Belongs to the cytochrome c-552 family. Requires Ca(2+) as cofactor. Heme c serves as cofactor.

It is found in the periplasm. It carries out the reaction 6 Fe(III)-[cytochrome c] + NH4(+) + 2 H2O = 6 Fe(II)-[cytochrome c] + nitrite + 8 H(+). The protein operates within nitrogen metabolism; nitrate reduction (assimilation). Catalyzes the reduction of nitrite to ammonia, consuming six electrons in the process. This chain is Cytochrome c-552, found in Bacteroides fragilis (strain ATCC 25285 / DSM 2151 / CCUG 4856 / JCM 11019 / LMG 10263 / NCTC 9343 / Onslow / VPI 2553 / EN-2).